The chain runs to 322 residues: Phospho-N-acetylmuramoyl-pentapeptide-transferase (322 aa).

10 helical membrane-spanning segments follow: residues 6 to 26, 54 to 74, 82 to 102, 122 to 142, 145 to 165, 176 to 196, 200 to 220, 227 to 247, 255 to 275, and 302 to 322; these read ASCI…PLLI, TMGG…VTAW, VWIL…DDGI, IIIA…FGLY, FAGV…WLVG, LDGL…YIAF, NFAI…FFIF, IFMG…VSIM, LLVG…VISF, and VDIV…AIWG.

Belongs to the glycosyltransferase 4 family. MraY subfamily. Requires Mg(2+) as cofactor.

It localises to the cell membrane. The enzyme catalyses UDP-N-acetyl-alpha-D-muramoyl-L-alanyl-gamma-D-glutamyl-L-lysyl-D-alanyl-D-alanine + di-trans,octa-cis-undecaprenyl phosphate = Mur2Ac(oyl-L-Ala-gamma-D-Glu-L-Lys-D-Ala-D-Ala)-di-trans,octa-cis-undecaprenyl diphosphate + UMP. Its pathway is cell wall biogenesis; peptidoglycan biosynthesis. In terms of biological role, catalyzes the initial step of the lipid cycle reactions in the biosynthesis of the cell wall peptidoglycan: transfers peptidoglycan precursor phospho-MurNAc-pentapeptide from UDP-MurNAc-pentapeptide onto the lipid carrier undecaprenyl phosphate, yielding undecaprenyl-pyrophosphoryl-MurNAc-pentapeptide, known as lipid I. This Lactobacillus helveticus (strain DPC 4571) protein is Phospho-N-acetylmuramoyl-pentapeptide-transferase.